The following is a 95-amino-acid chain: MSQTLRVIVTVQGRVQGVGYRAACADMARALGLRGWVRNRRDGAVEAFLAGPEPNVLRMQAWMEEGPDLALVTQLRTTPGDIEPLPPGFEVRPTV.

The region spanning 6–93 is the Acylphosphatase-like domain; sequence RVIVTVQGRV…PLPPGFEVRP (88 aa). Catalysis depends on residues arginine 21 and asparagine 39.

Belongs to the acylphosphatase family.

It catalyses the reaction an acyl phosphate + H2O = a carboxylate + phosphate + H(+). The sequence is that of Acylphosphatase 2 (acyP2) from Ralstonia nicotianae (strain ATCC BAA-1114 / GMI1000) (Ralstonia solanacearum).